The following is a 309-amino-acid chain: MSDRVIRIATRKSALAMWQAEYVQAKLLEAHPQLKVELVPMSTQGDRILDTPLAKIGGKGLFIKELEVAMSEGRADIAVHSMKDVPVDFPAGFGLHCICERENPYDAFVSNTYASIEELPQGAIVGTSSLRRQCQIRSARPDLTIRDLRGNVNTRLAKLDDGQYDAIILAAAGLIRLEMQDRIKTYIEPTVSLPAVGQGAVGIECRNDDAELIELLKPLNHSDTESRVKAERAMNAKLNGGCQVPIGSYAVLNGDELYLRGLVGSPDGSVLLQAEKRGNVNDALSIGVDVAEQLLEKGAGDILQALYKD.

S-(dipyrrolylmethanemethyl)cysteine is present on Cys242.

This sequence belongs to the HMBS family. Monomer. The cofactor is dipyrromethane.

It carries out the reaction 4 porphobilinogen + H2O = hydroxymethylbilane + 4 NH4(+). The protein operates within porphyrin-containing compound metabolism; protoporphyrin-IX biosynthesis; coproporphyrinogen-III from 5-aminolevulinate: step 2/4. Tetrapolymerization of the monopyrrole PBG into the hydroxymethylbilane pre-uroporphyrinogen in several discrete steps. The chain is Porphobilinogen deaminase from Pseudoalteromonas atlantica (strain T6c / ATCC BAA-1087).